The sequence spans 230 residues: Early E1A protein (230 aa).

The tract at residues 40–48 (PSLHDLFDL) is interaction with RB1 in competition with E2F1. The LXCXE motif, interaction with host RB1 signature appears at 106–110 (LLCLE). The segment at 145-163 (CLRCAYYQEQGENSICGLC) is a zinc-finger region. Positions 189–230 (KPGSRKRSAVTSRGSVESSKRPCLPEPEQTEPLDLSLKPRPQ) are disordered. A PXDLS motif, CTBP-binding motif is present at residues 220-224 (PLDLS). Positions 226-230 (KPRPQ) match the Nuclear localization signal motif.

It belongs to the adenoviridae E1A protein family. In terms of assembly, interacts with host UBE2I; this interaction interferes with polySUMOylation. Interacts with host RB1; this interaction induces the aberrant dissociation of RB1-E2F1 complex thereby disrupting the activity of RB1 and activating E2F1-regulated genes. Interacts with host ATF7; the interaction enhances ATF7-mediated viral transactivation activity which requires the zinc binding domains of both proteins. Isoform early E1A 32 kDa protein and isoform early E1A 26 kDa protein interact (via N-terminus) with CUL1 and E3 ubiquitin ligase RBX1; these interactions inhibit RBX1-CUL1-dependent elongation reaction of ubiquitin chains and attenuate ubiquitination of SCF(FBXW7) target proteins. Interacts (via PXLXP motif) with host ZMYND11/BS69 (via MYND-type zinc finger); this interaction inhibits E1A mediated transactivation. Interacts with host EP300; this interaction stimulates the acetylation of RB1 by recruiting EP300 and RB1 into a multimeric-protein complex. Interacts with host CTBP1 and CTBP2; this interaction seems to potentiate viral replication. Interacts with host DCAF7. Interacts with host DYRK1A. Interacts with host KPNA4; this interaction allows E1A import into the host nucleus. Interacts with host EP400; this interaction stabilizes MYC. Interacts with host TBP protein; this interaction probably disrupts the TBP-TATA complex.

The protein resides in the host nucleus. In terms of biological role, plays a role in viral genome replication by driving entry of quiescent cells into the cell cycle. Stimulation of progression from G1 to S phase allows the virus to efficiently use the cellular DNA replicating machinery to achieve viral genome replication. E1A protein has both transforming and trans-activating activities. Induces the disassembly of the E2F1 transcription factor from RB1 by direct competition for the same binding site on RB1, with subsequent transcriptional activation of E2F1-regulated S-phase genes and of the E2 region of the adenoviral genome. Release of E2F1 leads to the ARF-mediated inhibition of MDM2 and causes TP53/p53 to accumulate because it is not targeted for degradation by MDM2-mediated ubiquitination anymore. This increase in TP53, in turn, would arrest the cell proliferation and direct its death but this effect is counteracted by the viral protein E1B-55K. Inactivation of the ability of RB1 to arrest the cell cycle is critical for cellular transformation, uncontrolled cellular growth and proliferation induced by viral infection. Interaction with RBX1 and CUL1 inhibits ubiquitination of the proteins targeted by SCF(FBXW7) ubiquitin ligase complex, and may be linked to unregulated host cell proliferation. The tumorigenesis-restraining activity of E1A may be related to the disruption of the host CtBP-CtIP complex through the CtBP binding motif. The polypeptide is Early E1A protein (Canine adenovirus serotype 1 (strain CLL) (CAdV-1)).